Consider the following 248-residue polypeptide: 14-3-3 protein sigma (248 aa).

A phosphoserine mark is found at Ser5, Ser74, and Ser248.

The protein belongs to the 14-3-3 family. In terms of assembly, homodimer. Interacts with KRT17 and SAMSN1. Found in a complex with XPO7, EIF4A1, ARHGAP1, VPS26A, VPS29 and VPS35. Interacts with GAB2. Interacts with SRPK2. Interacts with COPS6. Interacts with COP1; this interaction leads to proteasomal degradation. Interacts with the 'Thr-369' phosphorylated form of DAPK2. Interacts with PI4KB. Interacts with SLITRK1. Interacts with LRRK2; this interaction is dependent on LRRK2 phosphorylation. Interacts with PKP3 (via N-terminus); the interaction maintains the cytoplasmic pool of PKP3, facilitates PKP3 exchange at desmosomes and restricts PKP3 localization to existing desmosome cell junctions. Interacts with LCP2. Ubiquitinated. Ubiquitination by RFFL induces proteasomal degradation and indirectly regulates p53/TP53 activation.

The protein localises to the cytoplasm. Its subcellular location is the nucleus. It is found in the secreted. In terms of biological role, adapter protein implicated in the regulation of a large spectrum of both general and specialized signaling pathways. Binds to a large number of partners, usually by recognition of a phosphoserine or phosphothreonine motif. Binding generally results in the modulation of the activity of the binding partner. Promotes cytosolic retention of GBP1 GTPase by binding to phosphorylated GBP1, thereby inhibiting the innate immune response. Also acts as a TP53/p53-regulated inhibitor of G2/M progression. When bound to KRT17, regulates protein synthesis and epithelial cell growth by stimulating Akt/mTOR pathway. Acts to maintain desmosome cell junction adhesion in epithelial cells via interacting with and sequestering PKP3 to the cytoplasm, thereby restricting its translocation to existing desmosome structures and therefore maintaining desmosome protein homeostasis. Also acts to facilitate PKP3 exchange at desmosome plaques, thereby maintaining keratinocyte intercellular adhesion. May also regulate MDM2 autoubiquitination and degradation and thereby activate p53/TP53. This is 14-3-3 protein sigma (SFN) from Bos taurus (Bovine).